A 366-amino-acid polypeptide reads, in one-letter code: Cobalt-precorrin-5B C(1)-methyltransferase (366 aa).

It belongs to the CbiD family.

It carries out the reaction Co-precorrin-5B + S-adenosyl-L-methionine = Co-precorrin-6A + S-adenosyl-L-homocysteine. It participates in cofactor biosynthesis; adenosylcobalamin biosynthesis; cob(II)yrinate a,c-diamide from sirohydrochlorin (anaerobic route): step 6/10. Functionally, catalyzes the methylation of C-1 in cobalt-precorrin-5B to form cobalt-precorrin-6A. The chain is Cobalt-precorrin-5B C(1)-methyltransferase from Methanococcus maripaludis (strain C7 / ATCC BAA-1331).